The following is a 702-amino-acid chain: Flagellar operon control protein UmoB (702 aa).

5 helical membrane-spanning segments follow: residues 4–24, 204–224, 227–247, 343–363, and 656–676; these read SVII…FLFF, GFWN…ALMM, VFLP…LFLI, IIFV…QPLS, and GNTL…FFII.

Belongs to the IgaA family.

The protein localises to the cell inner membrane. In terms of biological role, up-regulator of flagellar flhDC master operon. In Proteus mirabilis, this protein is Flagellar operon control protein UmoB (umoB).